Consider the following 96-residue polypeptide: Prokineticin Bm8-e (96 aa).

The N-terminal stretch at 1 to 19 (MKCFAQIVVLLLVIAFSHG) is a signal peptide. 5 disulfides stabilise this stretch: Cys-26–Cys-38, Cys-32–Cys-50, Cys-37–Cys-78, Cys-60–Cys-86, and Cys-80–Cys-95.

It belongs to the AVIT (prokineticin) family. Expressed by the skin glands.

It is found in the secreted. In terms of biological role, potent agonist for both PKR1/PROKR1 and PKR2/PROKR2, and inducer of a potent and long-lasting hyperalgesia. Also potentiates capsaicin-induced TRPV1 current, when tested on DRG neurons. At subnanomolar concentrations, this protein both induces potent chemotaxis of macrophages and stimulates LPS-induced production of the pro-inflammatory cytokines IL-1 and IL-12. In vivo, potently stimulates the contraction of the guinea-pig gastrointestinal (GI) smooth muscle (nanomolar concentration). The polypeptide is Prokineticin Bm8-e (Bombina maxima (Giant fire-bellied toad)).